Reading from the N-terminus, the 174-residue chain is RNA pyrophosphohydrolase (174 aa).

One can recognise a Nudix hydrolase domain in the interval 6-150 (GFRPNVGIVI…KREVYRRVMK (145 aa)). A Nudix box motif is present at residues 38 to 59 (GGVDDGETPEQAMFRELYEEIG).

The protein belongs to the Nudix hydrolase family. RppH subfamily. It depends on a divalent metal cation as a cofactor.

Its function is as follows. Accelerates the degradation of transcripts by removing pyrophosphate from the 5'-end of triphosphorylated RNA, leading to a more labile monophosphorylated state that can stimulate subsequent ribonuclease cleavage. This chain is RNA pyrophosphohydrolase, found in Tolumonas auensis (strain DSM 9187 / NBRC 110442 / TA 4).